The following is a 368-amino-acid chain: Single-stranded DNA-binding protein 3 (368 aa).

The 33-residue stretch at 16 to 48 folds into the LisH domain; that stretch reads AREKLALYVYEYLLHVGAQKSAQTFLSEIRWEK. The interval 100-368 is disordered; it reads PVLGNIPPND…NYSPSMTMSV (269 aa). The span at 126–139 shows a compositional bias: pro residues; sequence GSQPSPHAQPPPHN. Low complexity-rich tracts occupy residues 174-189, 211-220, and 230-248; these read PNMGGPMQRMNPPRGM, GPGMPGINMG, and PSSANSIPYSSSSPGTYVG. The segment covering 252-262 has biased composition (pro residues); sequence GGGPPGTPIMP. The span at 265-276 shows a compositional bias: polar residues; the sequence is ADSTNSSDNIYT. Gly residues predominate over residues 295 to 305; that stretch reads GSDGPMGGMGG. Over residues 326–337 the composition is skewed to low complexity; it reads NSPNNISGISNP. Residues 353-368 are compositionally biased toward polar residues; it reads HSFQNDNYSPSMTMSV.

Expressed in embryonic fibroblasts and chondrocytes.

The protein resides in the nucleus. Functionally, may be involved in transcription regulation of the alpha 2(I) collagen gene where it binds to the single-stranded polypyrimidine sequences in the promoter region. This Gallus gallus (Chicken) protein is Single-stranded DNA-binding protein 3 (SSBP3).